A 522-amino-acid chain; its full sequence is Berberine bridge enzyme-like Cyn d 4 (522 aa).

Residues 1-25 form the signal peptide; sequence MARSRAFAFALLICAVAASCHVALS. Cysteine 41 and cysteine 98 are joined by a disulfide. The region spanning 76-252 is the FAD-binding PCMH-type domain; sequence KTVKPLYIIT…ASWQVKLLPV (177 aa). An N-linked (GlcNAc...) asparagine glycan is attached at asparagine 88. Residues 108-114, serine 119, serine 152, 176-177, 181-185, phenylalanine 191, glutamate 237, and valine 242 contribute to the FAD site; these read VRSGGHD, VC, and GVGGH. The 6-(S-cysteinyl)-8alpha-(pros-histidyl)-FAD (His-Cys) cross-link spans 113–177; sequence HDYEGLSYRS…PKLGFPAGVC (65 aa). Cysteine 308 and cysteine 329 are joined by a disulfide. Asparagine 325 and asparagine 354 each carry an N-linked (GlcNAc...) asparagine glycan. Residue 461–465 coordinates FAD; sequence YVNYR. Residue asparagine 477 is glycosylated (N-linked (GlcNAc...) asparagine).

Belongs to the oxygen-dependent FAD-linked oxidoreductase family. As to quaternary structure, monomer. It depends on FAD as a cofactor. The FAD cofactor is bound via a bicovalent 6-S-cysteinyl, 8alpha-N1-histidyl FAD linkage. Post-translationally, the N-terminus is blocked. In terms of processing, glycosylated. N-glycosylated. Contains fucose, N-acetylglucosamine, and mannose as main carbohydrates (in a ratio of approximately 3:2:1), and a minute amount of xylose. The two most abundant oligosaccharides are Fuc(1)GlcNAc(2)Man(3) and Fuc(1)GlcNAc(2)Man(2), together comprising about 80% of the total carbohydrate content. They are structurally unusual in having a L-Fuc alpha-(1,3)-linked to Asn-linked GlcNAc without a Xyl beta-(1,2)-linked to the branching Man. The other oligosaccharides make up only 9% of the total carbohydrate content and are characterized by the presence of Xyl beta-(1,2)-linked to the branching Man. Expressed in pollen (at protein level).

This Cynodon dactylon (Bermuda grass) protein is Berberine bridge enzyme-like Cyn d 4.